The primary structure comprises 317 residues: Heme A synthase (317 aa).

Residues 1-6 (MQRSLK) are Cytoplasmic-facing. The helical transmembrane segment at 7–27 (WFASTTTVAMLFVLIGGALVT) threads the bilayer. The Extracellular segment spans residues 28 to 54 (KTDSGMGCGRSWPLCHGQWIPDDITPQ). The cysteines at positions 35 and 42 are disulfide-linked. The helical transmembrane segment at 55–75 (LVIELSHRLVSGLAAIMVLIL) threads the bilayer. Glu58 is an active-site residue. His61 is a heme o binding site. Residues 76 to 91 (CIRSWRVMGHVRETKP) are Cytoplasmic-facing. A helical membrane pass occupies residues 92–112 (LAVLSFVFLVLQSLIGAAAVV). The Extracellular portion of the chain corresponds to 113–123 (WGQSDFVMALH). His123 contributes to the heme o binding site. The helical transmembrane segment at 124–144 (FGISLISFAAVLLLTLLIFVV) threads the bilayer. At 145–159 (DKKFSPTSLQLDGQM) the chain is on the cytoplasmic side. A helical membrane pass occupies residues 160–180 (RFHIYGIIIYSYLVVYTGALV). Residues 181–214 (RHTNASLACPSWPLCAKSRLLPVQFHEWVQMGHR) are Extracellular-facing. Cys189 and Cys195 are oxidised to a cystine. Residue His213 participates in heme b binding. Residues 215 to 235 (LAAAVIIIWIAVATVHAARYY) traverse the membrane as a helical segment. Residues 236–243 (REQPVIYY) are Cytoplasmic-facing. A helical membrane pass occupies residues 244 to 264 (GWIISLLLVLAQMVTGALVVF). Over 265 to 272 (TELNLYIS) the chain is Extracellular. A helical transmembrane segment spans residues 273-293 (LAHAFFISCLFGVLSYLLLLA). Heme b is bound at residue His275. Topologically, residues 294–317 (LRTRRRPATAAGRSVEDTASAPLK) are cytoplasmic.

Belongs to the COX15/CtaA family. Type 1 subfamily. Interacts with CtaB. Heme b is required as a cofactor.

It is found in the cell membrane. It catalyses the reaction Fe(II)-heme o + 2 A + H2O = Fe(II)-heme a + 2 AH2. Its pathway is porphyrin-containing compound metabolism; heme A biosynthesis; heme A from heme O: step 1/1. In terms of biological role, catalyzes the conversion of heme O to heme A by two successive hydroxylations of the methyl group at C8. The first hydroxylation forms heme I, the second hydroxylation results in an unstable dihydroxymethyl group, which spontaneously dehydrates, resulting in the formyl group of heme A. This Geobacillus thermodenitrificans protein is Heme A synthase.